The chain runs to 361 residues: Phospho-N-acetylmuramoyl-pentapeptide-transferase (361 aa).

10 helical membrane passes run 26-46 (AILG…VMIR), 73-93 (TMGG…WADL), 97-117 (YVWV…VDDY), 134-154 (YFWQ…TASM), 168-188 (VSLT…IVGS), 200-220 (GLAI…AYLS), 237-257 (TGEL…FLWF), 264-284 (VFMG…VAVI), 289-309 (IVLF…ILQV), and 340-360 (IVRF…SLKI).

The protein belongs to the glycosyltransferase 4 family. MraY subfamily. It depends on Mg(2+) as a cofactor.

It localises to the cell inner membrane. The catalysed reaction is UDP-N-acetyl-alpha-D-muramoyl-L-alanyl-gamma-D-glutamyl-meso-2,6-diaminopimeloyl-D-alanyl-D-alanine + di-trans,octa-cis-undecaprenyl phosphate = di-trans,octa-cis-undecaprenyl diphospho-N-acetyl-alpha-D-muramoyl-L-alanyl-D-glutamyl-meso-2,6-diaminopimeloyl-D-alanyl-D-alanine + UMP. It functions in the pathway cell wall biogenesis; peptidoglycan biosynthesis. In terms of biological role, catalyzes the initial step of the lipid cycle reactions in the biosynthesis of the cell wall peptidoglycan: transfers peptidoglycan precursor phospho-MurNAc-pentapeptide from UDP-MurNAc-pentapeptide onto the lipid carrier undecaprenyl phosphate, yielding undecaprenyl-pyrophosphoryl-MurNAc-pentapeptide, known as lipid I. This Marinobacter nauticus (strain ATCC 700491 / DSM 11845 / VT8) (Marinobacter aquaeolei) protein is Phospho-N-acetylmuramoyl-pentapeptide-transferase.